The primary structure comprises 434 residues: Histidinol dehydrogenase (434 aa).

Residues Y130, Q188, and N211 each coordinate NAD(+). Residues S237, Q259, and H262 each coordinate substrate. 2 residues coordinate Zn(2+): Q259 and H262. Active-site proton acceptor residues include E326 and H327. Positions 327, 360, 414, and 419 each coordinate substrate. D360 contacts Zn(2+). H419 serves as a coordination point for Zn(2+).

It belongs to the histidinol dehydrogenase family. Homodimer. Zn(2+) is required as a cofactor.

The enzyme catalyses L-histidinol + 2 NAD(+) + H2O = L-histidine + 2 NADH + 3 H(+). The protein operates within amino-acid biosynthesis; L-histidine biosynthesis; L-histidine from 5-phospho-alpha-D-ribose 1-diphosphate: step 9/9. Functionally, catalyzes the sequential NAD-dependent oxidations of L-histidinol to L-histidinaldehyde and then to L-histidine. The sequence is that of Histidinol dehydrogenase from Escherichia coli O6:H1 (strain CFT073 / ATCC 700928 / UPEC).